We begin with the raw amino-acid sequence, 284 residues long: Tropomyosin alpha-3 chain (284 aa).

At Met1 the chain carries N-acetylmethionine. Residues 1–40 (MEAIKKKMQMLKLDKENALDRAEQAEAEQKQAEERSKQLE) are disordered. A coiled-coil region spans residues 1 to 284 (MEAIKKKMQM…DHALNDMTSI (284 aa)). Positions 12-40 (KLDKENALDRAEQAEAEQKQAEERSKQLE) are enriched in basic and acidic residues. Thr53 is modified (phosphothreonine). Residues Ser61 and Ser87 each carry the phosphoserine modification. Phosphothreonine occurs at positions 108 and 252. Tyr261 is subject to Phosphotyrosine. Ser271 is modified (phosphoserine). A Phosphothreonine modification is found at Thr282. Ser283 is subject to Phosphoserine.

The protein belongs to the tropomyosin family. Homodimer. Heterodimer of an alpha (TPM1, TPM3 or TPM4) and a beta (TPM2) chain. Interacts with TMOD1. Interacts with TNNT1.

It localises to the cytoplasm. It is found in the cytoskeleton. In terms of biological role, binds to actin filaments in muscle and non-muscle cells. Plays a central role, in association with the troponin complex, in the calcium dependent regulation of vertebrate striated muscle contraction. Smooth muscle contraction is regulated by interaction with caldesmon. In non-muscle cells is implicated in stabilizing cytoskeleton actin filaments. This is Tropomyosin alpha-3 chain (TPM3) from Sus scrofa (Pig).